We begin with the raw amino-acid sequence, 412 residues long: Potassium channel, subfamily K, member 13 (412 aa).

Over 1-21 the chain is Cytoplasmic; it reads MACRSGCCCNSIGSFNEDNAR. The helical transmembrane segment at 22-42 threads the bilayer; it reads FLMLALLIIIYLLCGAAVFSA. An intramembrane region (pore-forming) is located at residues 97 to 117; that stretch reads WDFAGAFYFVGTVVSTIGFGM. Residues T112, I113, and G114 each contribute to the K(+) site. Positions 112 to 117 are selectivity filter 1; it reads TIGFGM. A helical membrane pass occupies residues 127 to 147; the sequence is IFLIFYGLIGCAATILFFNLF. The Cytoplasmic portion of the chain corresponds to 148–198; it reads LERVITVIAFVLKFCHERRESRKAGPTQNCRRPSTDNRDRRTDSLAGWKPS. A helical membrane pass occupies residues 199–219; it reads VYCVMLILGVAAILVSCCASA. An intramembrane region (pore-forming) is located at residues 229–249; the sequence is YLDALYFCFVAFSTIGFGDMV. 4 residues coordinate K(+): T242, I243, G244, and F245. The interval 242-247 is selectivity filter 2; sequence TIGFGD. Residues 268-288 traverse the membrane as a helical segment; that stretch reads LFILTGVCCIYSLFNVISIVI. Over 289–412 the chain is Cytoplasmic; sequence KQVLNWLLRR…NRLAETSVDR (124 aa). The span at 374 to 386 shows a compositional bias: polar residues; sequence MANGHPRQSGSSS. The interval 374-395 is disordered; sequence MANGHPRQSGSSSRHNEFSGGV.

Belongs to the two pore domain potassium channel (TC 1.A.1.8) family. In terms of assembly, homodimer. Heterodimer. As to expression, brain and heart.

It is found in the cell membrane. The enzyme catalyses K(+)(in) = K(+)(out). Its activity is regulated as follows. The channel conductance is activated by arachidonic acid and inhibited by Ba(2+) ions, volatile anesthetics such as halothane and antiarrhythmic drug mexiletine. Insensitive to extracellular pH change. In terms of biological role, k(+) channel that conducts outward rectifying tonic currents potentiated by purinergic signals. Homo- and heterodimerizes to form functional channels with distinct regulatory and gating properties. Contributes most of K(+) currents at the plasma membrane of resting microglia. Maintains a depolarized membrane potential required for proper ramified microglia morphology and phagocytosis, selectively mediating microglial pruning of presynaptic compartments at hippocampal excitatory synapses. Upon local release of ATP caused by neuronal injury or infection, it is potentiated by purinergic signaling and contributes to ATP-triggered K(+) efflux underlying microglial NLRP3 inflammasome assembly and IL1B release. This Danio rerio (Zebrafish) protein is Potassium channel, subfamily K, member 13.